Here is a 176-residue protein sequence, read N- to C-terminus: Inner membrane-spanning protein YciB (176 aa).

6 helical membrane passes run 3-23 (FLFDLFPIILFFAAFKVWGIF), 24-44 (TATAVAIVATLAQVAWVAFRH), 49-69 (TMLWVSLGVIVVFGGATLVLH), 81-101 (LYWLFAIGLLAARYAFGNNLI), 121-141 (VAWALFFAVLGLANLYVVHNF), and 149-169 (FKLFGTTGAMVVFIILQSLWL).

It belongs to the YciB family.

It localises to the cell inner membrane. Its function is as follows. Plays a role in cell envelope biogenesis, maintenance of cell envelope integrity and membrane homeostasis. The sequence is that of Inner membrane-spanning protein YciB from Burkholderia vietnamiensis (strain G4 / LMG 22486) (Burkholderia cepacia (strain R1808)).